The primary structure comprises 549 residues: CTP synthase (549 aa).

The segment at 1–267 (MAKFVFITGG…CREVLDVLQL (267 aa)) is amidoligase domain. Residue S13 coordinates CTP. Residue S13 coordinates UTP. Residues 14–19 (SIGKGI) and D71 contribute to the ATP site. Residues D71 and E141 each coordinate Mg(2+). Residues 148–150 (DIE), 188–193 (KTKPTQ), and K224 each bind CTP. Residues 188–193 (KTKPTQ) and K224 contribute to the UTP site. In terms of domain architecture, Glutamine amidotransferase type-1 spans 292-534 (KVALVGKYVQ…IEAAQQRLPD (243 aa)). Residue G354 participates in L-glutamine binding. The Nucleophile; for glutamine hydrolysis role is filled by C381. Residues 382 to 385 (LGMQ), E405, and R462 each bind L-glutamine. Active-site residues include H507 and E509.

Belongs to the CTP synthase family. In terms of assembly, homotetramer.

The catalysed reaction is UTP + L-glutamine + ATP + H2O = CTP + L-glutamate + ADP + phosphate + 2 H(+). The enzyme catalyses L-glutamine + H2O = L-glutamate + NH4(+). It catalyses the reaction UTP + NH4(+) + ATP = CTP + ADP + phosphate + 2 H(+). Its pathway is pyrimidine metabolism; CTP biosynthesis via de novo pathway; CTP from UDP: step 2/2. Its activity is regulated as follows. Allosterically activated by GTP, when glutamine is the substrate; GTP has no effect on the reaction when ammonia is the substrate. The allosteric effector GTP functions by stabilizing the protein conformation that binds the tetrahedral intermediate(s) formed during glutamine hydrolysis. Inhibited by the product CTP, via allosteric rather than competitive inhibition. Its function is as follows. Catalyzes the ATP-dependent amination of UTP to CTP with either L-glutamine or ammonia as the source of nitrogen. Regulates intracellular CTP levels through interactions with the four ribonucleotide triphosphates. The protein is CTP synthase of Synechococcus sp. (strain CC9902).